The following is a 434-amino-acid chain: Asparagine--tRNA ligase (434 aa).

The protein belongs to the class-II aminoacyl-tRNA synthetase family. As to quaternary structure, homodimer.

It is found in the cytoplasm. The catalysed reaction is tRNA(Asn) + L-asparagine + ATP = L-asparaginyl-tRNA(Asn) + AMP + diphosphate + H(+). This chain is Asparagine--tRNA ligase, found in Oenococcus oeni (strain ATCC BAA-331 / PSU-1).